We begin with the raw amino-acid sequence, 361 residues long: DNA replication and repair protein RecF (361 aa).

30 to 37 (GANGSGKT) provides a ligand contact to ATP.

Belongs to the RecF family.

The protein localises to the cytoplasm. In terms of biological role, the RecF protein is involved in DNA metabolism; it is required for DNA replication and normal SOS inducibility. RecF binds preferentially to single-stranded, linear DNA. It also seems to bind ATP. The polypeptide is DNA replication and repair protein RecF (Chromohalobacter salexigens (strain ATCC BAA-138 / DSM 3043 / CIP 106854 / NCIMB 13768 / 1H11)).